The primary structure comprises 361 residues: Cysteine-rich with EGF-like domain protein 2-B (361 aa).

The N-terminal stretch at 1–24 is a signal peptide; it reads MNGSRAWRLAAWLLLCLSCSAAVA. One can recognise an EGF-like 1 domain in the interval 134–176; it reads DCLACLGGSERPCHGNGFCSGDGTRSGDGSCRCKAEYTGSFCL. Intrachain disulfides connect Cys138-Cys152, Cys146-Cys164, and Cys166-Cys175. Asn188 carries N-linked (GlcNAc...) asparagine glycosylation. FU repeat units lie at residues 191–238 and 251–298; these read HAVC…EESP and SFLC…SEKL. One can recognise an EGF-like 2; calcium-binding domain in the interval 288–329; that stretch reads DVDECDASEKLCLRENEVCLNTAGSYKCTCSEGFEDKEGNCV. Intrachain disulfides connect Cys292-Cys306, Cys299-Cys315, and Cys317-Cys328. Residues 339-361 form a disordered region; sequence ITEGETGTPASDTNILNTAHEDL. Polar residues predominate over residues 346–355; sequence TPASDTNILN.

Belongs to the CRELD family.

Its subcellular location is the secreted. The protein localises to the endoplasmic reticulum. Possible role in neuronal acetylcholine receptor transport. This chain is Cysteine-rich with EGF-like domain protein 2-B (creld2-b), found in Xenopus laevis (African clawed frog).